The chain runs to 288 residues: MDDISVSKSNHGNVVVLNIKASSLADTSLPSNKHESSSPPLLSVHFLQKLLAELVGTYYLIFAGCAAIAVNAQHNHVVTLVGIAVVWGIVIMVLVYCLGHLSAHFNPAVTLALASSQRFPLNQVPAYITVQVIGSTLASATLRLLFDLNNDVCSKKHDVFLGSSPSGSDLQAFVMEFIITGFLMLVVCAVTTTKRTTEELEGLIIGATVTLNVIFAGEVSGASMNPARSIGPALVWGCYKGIWIYLLAPTLGAVSGALIHKMLPSIQNAEPEFSKTGSSHKRVTDLPL.

Position 1 is an N-acetylmethionine (Met-1). The next 2 helical transmembrane spans lie at 50–70 (LLAE…AIAV) and 77–97 (VVTL…LVYC). The short motif at 106-108 (NPA) is the NPA 1 element. 3 helical membrane passes run 126–146 (AYIT…RLLF), 170–190 (LQAF…VCAV), and 202–222 (GLII…VSGA). The NPA 2 motif lies at 225 to 227 (NPA). The helical transmembrane segment at 234-254 (LVWGCYKGIWIYLLAPTLGAV) threads the bilayer. Ser-278 bears the Phosphoserine mark.

The protein belongs to the MIP/aquaporin (TC 1.A.8) family. NIP (TC 1.A.8.12) subfamily. In terms of tissue distribution, specifically expressed in roots with high expression in root elongation zone and root stele.

The protein localises to the endoplasmic reticulum membrane. Functionally, low water transport activity in yeast cells. This is Aquaporin NIP2-1 (NIP2-1) from Arabidopsis thaliana (Mouse-ear cress).